A 403-amino-acid polypeptide reads, in one-letter code: Endophilin-B2 (403 aa).

The tract at residues 1-27 (MDFNVKKLASDAGVFFSRAMQFTEEKL) is membrane-binding amphipathic helix. The 264-residue stretch at 24-287 (EEKLGQAEKT…LGRFSGTFVG (264 aa)) folds into the BAR domain. Residues 210 to 233 (WSDEVEKAEHELRLTQTEFDRQAE) are a coiled coil. An SH3 domain is found at 343–403 (SGTRKARVLY…VPVTYLELLS (61 aa)).

It belongs to the endophilin family. In terms of assembly, homodimer, and heterodimer with SH3GLB1.

It is found in the cytoplasm. The sequence is that of Endophilin-B2 from Gallus gallus (Chicken).